We begin with the raw amino-acid sequence, 566 residues long: NAD-dependent malic enzyme 3 (566 aa).

Tyrosine 105 (proton donor) is an active-site residue. Lysine 178 serves as the catalytic Proton acceptor. A divalent metal cation is bound by residues glutamate 249, aspartate 250, and aspartate 273. Residues 306-309 (AGTA), asparagine 423, and asparagine 468 each bind NAD(+).

Belongs to the malic enzymes family. Mg(2+) is required as a cofactor. Mn(2+) serves as cofactor.

The enzyme catalyses (S)-malate + NAD(+) = pyruvate + CO2 + NADH. The catalysed reaction is oxaloacetate + H(+) = pyruvate + CO2. Functionally, catalyzes the decarboxylation of malate to pyruvate. Can use NAD and NADP, but with a strong preference for NAD. Can also catalyze the decarboxylation of oxaloacetate. Involved in keeping the ATP levels high. This is NAD-dependent malic enzyme 3 (malS) from Bacillus subtilis (strain 168).